Here is a 420-residue protein sequence, read N- to C-terminus: Hemocyanin 2-c chain (420 aa).

A compositionally biased stretch (basic residues) spans 1–12; that stretch reads DFGHSKKIRKNV. The tract at residues 1 to 20 is disordered; sequence DFGHSKKIRKNVHSLTAEEQ. A Cu cation-binding site is contributed by H46. Residues C52 and C63 are joined by a disulfide bond. Cu cation is bound by residues H66, H73, H185, H189, and H216. Intrachain disulfides connect C175-C242 and C335-C342.

O-glycosylated. In terms of tissue distribution, hemolymph.

It localises to the secreted. The protein localises to the extracellular space. Hemocyanins are copper-containing oxygen carriers occurring freely dissolved in the hemolymph of many mollusks and arthropods. The chain is Hemocyanin 2-c chain from Megathura crenulata (Giant keyhole limpet).